The sequence spans 503 residues: Xylan O-acetyltransferase 12 (503 aa).

Over 1–54 (MWSALFSHLREVHKRSGVKEEKLIMKSPAAAGEAAGCHKPQATATNKMTVLQSP) the chain is Cytoplasmic. The chain crosses the membrane as a helical; Signal-anchor for type II membrane protein span at residues 55–77 (LGLRTILTSLVAFFIVVSSVSLL). Residues 78–503 (FDRSQDAQAQ…EFLYAYLMHK (426 aa)) lie on the Lumenal side of the membrane. Cystine bridges form between cysteine 153–cysteine 204, cysteine 175–cysteine 240, cysteine 184–cysteine 484, and cysteine 400–cysteine 480. Residues asparagine 154, asparagine 164, asparagine 190, and asparagine 210 are each glycosylated (N-linked (GlcNAc...) asparagine). The short motif at 227-229 (GDS) is the GDS motif element. Serine 229 serves as the catalytic Nucleophile. 5 N-linked (GlcNAc...) asparagine glycosylation sites follow: asparagine 256, asparagine 268, asparagine 373, asparagine 402, and asparagine 443. Aspartate 479 serves as the catalytic Proton donor. A DXXH motif motif is present at residues 479–482 (DCTH). The Proton acceptor role is filled by histidine 482.

Belongs to the PC-esterase family. TBL subfamily.

It is found in the golgi apparatus membrane. Its function is as follows. Xylan acetyltransferase required for 2-O- and 3-O-monoacetylation of xylosyl residues in xylan. Catalyzes the 2-O-acetylation of xylan, followed by nonenzymatic acetyl migration to the O-3 position, resulting in products that are monoacetylated at both O-2 and O-3 positions. The sequence is that of Xylan O-acetyltransferase 12 from Oryza sativa subsp. japonica (Rice).